A 264-amino-acid polypeptide reads, in one-letter code: Cell cycle regulator CcrZ (264 aa).

ATP-binding residues include Phe-32, Trp-70, and Gly-73. Positions 157–164 (HGDVRHSN) match the Brenner's motif [HXDhX3N] motif. Asp-159 serves as the catalytic Proton acceptor. Positions 173–196 (IYLVDWDSVRLTDRMFDVAHMLCH) match the APH motif.

Belongs to the aminoglycoside phosphotransferase family. Monomer in solution. Interacts with DnaA (via domains I (1-82) and III (111-326)). Interacts with DnaB. Interacts with FtsZ; the interaction is direct and ensures correct localization during the cell cycle.

Its subcellular location is the cytoplasm. The enzyme catalyses D-ribose + ATP = D-ribose 5-phosphate + ADP + H(+). It carries out the reaction 2-deoxy-D-ribose + ATP = 2-deoxy-D-ribose 5-phosphate + ADP + H(+). Plays a role in cell cycle regulation and chromosome integrity. Activates DnaA-dependent chromosomal DNA replication initiation ensuring that the chromosome is replicated at the right time during the cell cycle. May regulate replication initiation through phosphorylation of a possible second messenger or metabolite, and by interacting with replication initiation proteins. Has ATPase activity with D-ribose and 2-deoxy-D-ribose in vitro, but not with choline. Involved in DNA damage response. This Streptococcus pneumoniae serotype 2 (strain D39 / NCTC 7466) protein is Cell cycle regulator CcrZ.